We begin with the raw amino-acid sequence, 295 residues long: Acetaldehyde dehydrogenase (295 aa).

11-14 (SGNI) is an NAD(+) binding site. Catalysis depends on Cys127, which acts as the Acyl-thioester intermediate. NAD(+)-binding positions include 158-166 (SAGPGTRSN) and Asn269.

The protein belongs to the acetaldehyde dehydrogenase family.

It carries out the reaction acetaldehyde + NAD(+) + CoA = acetyl-CoA + NADH + H(+). The polypeptide is Acetaldehyde dehydrogenase (Brevibacillus brevis (strain 47 / JCM 6285 / NBRC 100599)).